The sequence spans 262 residues: Polyamine aminopropyltransferase (262 aa).

Residues 1–249 (MWITQEITPY…DIHRAAFALP (249 aa)) enclose the PABS domain. Position 29 (Asn29) interacts with S-methyl-5'-thioadenosine. Asp83 contacts spermidine. The active-site Proton acceptor is Asp155.

It belongs to the spermidine/spermine synthase family. Homodimer or homotetramer.

Its subcellular location is the cytoplasm. It catalyses the reaction S-adenosyl 3-(methylsulfanyl)propylamine + putrescine = S-methyl-5'-thioadenosine + spermidine + H(+). It participates in amine and polyamine biosynthesis; spermidine biosynthesis; spermidine from putrescine: step 1/1. Catalyzes the irreversible transfer of a propylamine group from the amino donor S-adenosylmethioninamine (decarboxy-AdoMet) to putrescine (1,4-diaminobutane) to yield spermidine. This is Polyamine aminopropyltransferase from Helicobacter pylori (strain HPAG1).